The chain runs to 314 residues: Protein YIF1B (314 aa).

N-acetylmethionine is present on Met1. Residues 1–12 (MHPAGLAAAAAG) are compositionally biased toward low complexity. Residues 1–55 (MHPAGLAAAAAGTPRLRKWPSKRRIPVSQPGMADPHQLFDDTSSAQSRGYGAQRA) form a disordered region. The Cytoplasmic segment spans residues 1–156 (MHPAGLAAAA…APRFDVNAPD (156 aa)). Thr13 is subject to Phosphothreonine. The segment covering 15-25 (RLRKWPSKRRI) has biased composition (basic residues). Ser65 carries the phosphoserine modification. The chain crosses the membrane as a helical span at residues 157 to 177 (LYIPAMAFITYVLVAGLALGT). The Extracellular segment spans residues 178 to 192 (QDRFSPDLLGLQASS). Residues 193–213 (ALAWLTLEVLAILLSLYLVTV) form a helical membrane-spanning segment. At 214-219 (NTDLTT) the chain is on the cytoplasmic side. The chain crosses the membrane as a helical span at residues 220–240 (IDLVAFLGYKYVGMIGGVLMG). A topological domain (extracellular) is located at residue Leu241. Residues 242-262 (LFGKIGYYLVLGWCCVAIFVF) form a helical membrane-spanning segment. Residues 263–292 (MIRTLRLKILADAAAEGVPVRGARNQLRMY) lie on the Cytoplasmic side of the membrane. Residues 293–313 (LTMAVAAAQPMLMYWLTFHLV) traverse the membrane as a helical segment. Arg314 is a topological domain (extracellular).

It belongs to the YIF1 family. In terms of assembly, interacts with HTR1A (via C-terminus). Interacts with ABCB9 (via TMD0); this interaction allows (but is not essential) the ER-to-Golgi trafficking and strongly depends on a salt bridge within TMD0.

Its subcellular location is the endoplasmic reticulum membrane. The protein localises to the golgi apparatus membrane. It is found in the endoplasmic reticulum-Golgi intermediate compartment membrane. In terms of biological role, functions in endoplasmic reticulum to Golgi vesicle-mediated transport and regulates the proper organization of the endoplasmic reticulum and the Golgi. Plays a key role in targeting to neuronal dendrites receptors such as HTR1A. Plays also a role in primary cilium and sperm flagellum assembly probably through protein transport to these compartments. In Homo sapiens (Human), this protein is Protein YIF1B.